A 191-amino-acid polypeptide reads, in one-letter code: SCO2-like protein RP031 (191 aa).

The protein belongs to the SCO1/2 family.

This is SCO2-like protein RP031 from Rickettsia prowazekii (strain Madrid E).